A 168-amino-acid polypeptide reads, in one-letter code: Ubiquitin-fold modifier-conjugating enzyme 1 (168 aa).

Residue C119 is the Glycyl thioester intermediate of the active site.

The protein belongs to the ubiquitin-conjugating enzyme family. UFC1 subfamily.

Its function is as follows. E2-like enzyme which forms an intermediate with UFM1 via a thioester linkage. In Drosophila grimshawi (Hawaiian fruit fly), this protein is Ubiquitin-fold modifier-conjugating enzyme 1.